Reading from the N-terminus, the 196-residue chain is Regulator of G-protein signaling 8 (196 aa).

Serine 26 is modified (phosphoserine). In terms of domain architecture, RGS spans 72–188 (SFDVLLSHKY…LRSKMYLDLL (117 aa)).

In terms of assembly, interacts with GNAO1 and GNAI3.

It localises to the cell membrane. Its subcellular location is the membrane. The protein localises to the perikaryon. The protein resides in the cell projection. It is found in the dendrite. It localises to the nucleus. Its function is as follows. Regulates G protein-coupled receptor signaling cascades, including signaling via muscarinic acetylcholine receptor CHRM2 and dopamine receptor DRD2. Inhibits signal transduction by increasing the GTPase activity of G protein alpha subunits, thereby driving them into their inactive GDP-bound form. Modulates the activity of potassium channels that are activated in response to DRD2 and CHRM2 signaling. This Macaca fascicularis (Crab-eating macaque) protein is Regulator of G-protein signaling 8 (RGS8).